Reading from the N-terminus, the 2008-residue chain is Histone-lysine N-methyltransferase SETD1B (2008 aa).

A compositionally biased stretch (basic and acidic residues) spans methionine 1–lysine 20. Positions methionine 1–lysine 42 are disordered. Over residues glutamine 22–serine 39 the composition is skewed to polar residues. The region spanning aspartate 111–lysine 199 is the RRM domain. Disordered stretches follow at residues asparagine 249 to lysine 390, phenylalanine 402 to threonine 652, proline 682 to proline 725, arginine 950 to glutamate 1172, threonine 1309 to glutamate 1328, valine 1345 to threonine 1461, valine 1563 to glycine 1600, lysine 1674 to arginine 1712, and glutamate 1814 to glutamate 1842. Residues serine 251–proline 264 are compositionally biased toward low complexity. Composition is skewed to polar residues over residues phenylalanine 265–proline 293, proline 301–proline 315, histidine 360–leucine 381, serine 405–serine 414, and aspartate 456–serine 491. The segment covering leucine 492–methionine 521 has biased composition (basic and acidic residues). The span at serine 524–proline 537 shows a compositional bias: low complexity. Composition is skewed to polar residues over residues glycine 540–glycine 560 and alanine 582–arginine 604. Basic and acidic residues-rich tracts occupy residues serine 606 to valine 617 and glutamate 626 to glycine 636. The segment covering glutamate 637–methionine 646 has biased composition (acidic residues). Basic and acidic residues predominate over residues glutamate 979–glutamate 997. Over residues leucine 1011–glutamate 1020 the composition is skewed to acidic residues. The segment covering threonine 1021–glutamate 1031 has biased composition (basic and acidic residues). 2 stretches are compositionally biased toward acidic residues: residues glutamate 1050–alanine 1094 and glutamate 1105–aspartate 1149. Over residues arginine 1150–glutamate 1172 the composition is skewed to basic and acidic residues. The segment covering valine 1345–proline 1356 has biased composition (low complexity). Over residues serine 1378–leucine 1392 the composition is skewed to basic and acidic residues. Low complexity predominate over residues leucine 1418–serine 1427. Basic residues-rich tracts occupy residues leucine 1577 to arginine 1587 and lysine 1681 to lysine 1690. Residues isoleucine 1699–glutamine 1710 are compositionally biased toward pro residues. The short motif at arginine 1840–arginine 1845 is the RxxxRR motif element. The 118-residue stretch at lysine 1869–lysine 1986 folds into the SET domain. Tyrosine 1985 serves as a coordination point for S-adenosyl-L-methionine. A Post-SET domain is found at valine 1992–asparagine 2008.

It belongs to the class V-like SAM-binding methyltransferase superfamily. As to quaternary structure, component of the SET1B/COMPASS complex.

The protein localises to the nucleus speckle. Its subcellular location is the chromosome. It catalyses the reaction L-lysyl(4)-[histone H3] + 3 S-adenosyl-L-methionine = N(6),N(6),N(6)-trimethyl-L-lysyl(4)-[histone H3] + 3 S-adenosyl-L-homocysteine + 3 H(+). Histone methyltransferase that specifically methylates 'Lys-4' of histone H3, when part of the SET1 histone methyltransferase (HMT) complex, but not if the neighboring 'Lys-9' residue is already methylated. H3 'Lys-4' methylation represents a specific tag for epigenetic transcriptional activation. In Gallus gallus (Chicken), this protein is Histone-lysine N-methyltransferase SETD1B (SETD1B).